A 127-amino-acid polypeptide reads, in one-letter code: Aspartate 1-decarboxylase (127 aa).

Residue Ser25 is the Schiff-base intermediate with substrate; via pyruvic acid of the active site. Ser25 is modified (pyruvic acid (Ser)). Thr57 contributes to the substrate binding site. Tyr58 acts as the Proton donor in catalysis. 73 to 75 (GAA) provides a ligand contact to substrate.

Belongs to the PanD family. As to quaternary structure, heterooctamer of four alpha and four beta subunits. Pyruvate is required as a cofactor. Is synthesized initially as an inactive proenzyme, which is activated by self-cleavage at a specific serine bond to produce a beta-subunit with a hydroxyl group at its C-terminus and an alpha-subunit with a pyruvoyl group at its N-terminus.

It localises to the cytoplasm. It carries out the reaction L-aspartate + H(+) = beta-alanine + CO2. It functions in the pathway cofactor biosynthesis; (R)-pantothenate biosynthesis; beta-alanine from L-aspartate: step 1/1. Its function is as follows. Catalyzes the pyruvoyl-dependent decarboxylation of aspartate to produce beta-alanine. The polypeptide is Aspartate 1-decarboxylase (Halalkalibacterium halodurans (strain ATCC BAA-125 / DSM 18197 / FERM 7344 / JCM 9153 / C-125) (Bacillus halodurans)).